We begin with the raw amino-acid sequence, 202 residues long: Large ribosomal subunit protein bL25 (202 aa).

This sequence belongs to the bacterial ribosomal protein bL25 family. CTC subfamily. Part of the 50S ribosomal subunit; part of the 5S rRNA/L5/L18/L25 subcomplex. Contacts the 5S rRNA. Binds to the 5S rRNA independently of L5 and L18.

Its function is as follows. This is one of the proteins that binds to the 5S RNA in the ribosome where it forms part of the central protuberance. This chain is Large ribosomal subunit protein bL25, found in Methylococcus capsulatus (strain ATCC 33009 / NCIMB 11132 / Bath).